The chain runs to 204 residues: Nascent polypeptide-associated complex subunit alpha (204 aa).

Positions methionine 1–valine 19 are enriched in basic and acidic residues. 2 disordered regions span residues methionine 1–asparagine 48 and leucine 119–alanine 167. Over residues alanine 22 to glutamate 32 the composition is skewed to acidic residues. In terms of domain architecture, NAC-A/B spans serine 46 to alanine 111. Over residues leucine 119–glutamate 128 the composition is skewed to low complexity. The span at histidine 129–glutamate 151 shows a compositional bias: basic and acidic residues. Acidic residues predominate over residues glutamate 152–glycine 164. In terms of domain architecture, UBA spans leucine 165–isoleucine 204.

The protein belongs to the NAC-alpha family. As to quaternary structure, part of the nascent polypeptide-associated complex (NAC), consisting of egd2 and egd1. NAC associates with ribosomes via egd1.

It localises to the cytoplasm. Its subcellular location is the nucleus. Functionally, component of the nascent polypeptide-associated complex (NAC), a dynamic component of the ribosomal exit tunnel, protecting the emerging polypeptides from interaction with other cytoplasmic proteins to ensure appropriate nascent protein targeting. The NAC complex also promotes mitochondrial protein import by enhancing productive ribosome interactions with the outer mitochondrial membrane and blocks the inappropriate interaction of ribosomes translating non-secretory nascent polypeptides with translocation sites in the membrane of the endoplasmic reticulum. Egd2 may also be involved in transcription regulation. This is Nascent polypeptide-associated complex subunit alpha (egd2) from Aspergillus clavatus (strain ATCC 1007 / CBS 513.65 / DSM 816 / NCTC 3887 / NRRL 1 / QM 1276 / 107).